We begin with the raw amino-acid sequence, 90 residues long: WAP four-disulfide core domain protein 12 (90 aa).

The first 23 residues, 1 to 23, serve as a signal peptide directing secretion; sequence MGSSSFLVLMVSLALVTLVAVEG. Residues 27–74 enclose the WAP domain; it reads GIEKAGVCPADNVRCFKSDPPQCHTDQDCLGERKCCYLHCGFKCVIPV. Disulfide bonds link Cys34–Cys62, Cys41–Cys66, Cys49–Cys61, and Cys55–Cys70.

Its subcellular location is the secreted. In terms of biological role, antibacterial protein. Putative acid-stable proteinase inhibitor. The protein is WAP four-disulfide core domain protein 12 (WFDC12) of Pongo abelii (Sumatran orangutan).